Consider the following 536-residue polypeptide: Chaperonin GroEL 2 (536 aa).

ATP-binding positions include 29-32, lysine 50, glycine 416, and aspartate 497; that span reads TLGP.

It belongs to the chaperonin (HSP60) family. In terms of assembly, forms a cylinder of 14 subunits composed of two heptameric rings stacked back-to-back. Interacts with the co-chaperonin GroES.

The protein localises to the cytoplasm. It carries out the reaction ATP + H2O + a folded polypeptide = ADP + phosphate + an unfolded polypeptide.. Its function is as follows. Together with its co-chaperonin GroES, plays an essential role in assisting protein folding. The GroEL-GroES system forms a nano-cage that allows encapsulation of the non-native substrate proteins and provides a physical environment optimized to promote and accelerate protein folding. The chain is Chaperonin GroEL 2 from Chlamydia caviae (strain ATCC VR-813 / DSM 19441 / 03DC25 / GPIC) (Chlamydophila caviae).